Reading from the N-terminus, the 480-residue chain is Glutarate-semialdehyde dehydrogenase (480 aa).

NADP(+) contacts are provided by residues 156 to 157 (WN), 180 to 183 (KPAS), and 233 to 234 (GS). The active-site Proton acceptor is the Glu-255. Residue Leu-256 coordinates NADP(+). The active-site Nucleophile is Cys-289. Glu-384 contacts NADP(+).

It belongs to the aldehyde dehydrogenase family.

The catalysed reaction is 5-oxopentanoate + NADP(+) + H2O = glutarate + NADPH + 2 H(+). The protein operates within amino-acid degradation. Catalyzes the conversion of 5-oxopentanoate (glutarate semialdehyde) to glutarate. Involved in L-lysine degradation. This Pseudomonas putida (strain ATCC 47054 / DSM 6125 / CFBP 8728 / NCIMB 11950 / KT2440) protein is Glutarate-semialdehyde dehydrogenase.